A 250-amino-acid polypeptide reads, in one-letter code: 1-(5-phosphoribosyl)-5-[(5-phosphoribosylamino)methylideneamino] imidazole-4-carboxamide isomerase (250 aa).

The active-site Proton acceptor is the Asp12. Asp134 serves as the catalytic Proton donor.

This sequence belongs to the HisA/HisF family.

The protein resides in the cytoplasm. The enzyme catalyses 1-(5-phospho-beta-D-ribosyl)-5-[(5-phospho-beta-D-ribosylamino)methylideneamino]imidazole-4-carboxamide = 5-[(5-phospho-1-deoxy-D-ribulos-1-ylimino)methylamino]-1-(5-phospho-beta-D-ribosyl)imidazole-4-carboxamide. Its pathway is amino-acid biosynthesis; L-histidine biosynthesis; L-histidine from 5-phospho-alpha-D-ribose 1-diphosphate: step 4/9. This Actinobacillus pleuropneumoniae serotype 3 (strain JL03) protein is 1-(5-phosphoribosyl)-5-[(5-phosphoribosylamino)methylideneamino] imidazole-4-carboxamide isomerase.